The chain runs to 676 residues: Envelope glycoprotein (676 aa).

Residues 1–34 (MACSTLSKSPKDKIDPRDLLIPLILFLSLKGARS) form the signal peptide. The tract at residues 35–270 (AAPGSSPHQV…KYQNLGPRVP (236 aa)) is receptor-binding domain (RBD). Residues 35-620 (AAPGSSPHQV…FNRSPWFTTL (586 aa)) are Extracellular-facing. Asn-46 is a glycosylation site (N-linked (GlcNAc...) asparagine; by host). 5 disulfide bridges follow: Cys-80–Cys-132, Cys-106–Cys-121, Cys-107–Cys-117, Cys-155–Cys-175, and Cys-167–Cys-180. Residue His-89 participates in Zn(2+) binding. Asp-120 contacts Zn(2+). N-linked (GlcNAc...) asparagine; by host glycosylation occurs at Asn-202. Cys-212 and Cys-218 are disulfide-bonded. Residues 287 to 322 (NPLPKPAKSPSASNSTPTLISPSPAPTQPPPAGTGD) are disordered. Over residues 294–308 (KSPSASNSTPTLISP) the composition is skewed to low complexity. The segment covering 309–318 (SPAPTQPPPA) has biased composition (pro residues). N-linked (GlcNAc...) asparagine; by host glycosylation occurs at Asn-336. 6 cysteine pairs are disulfide-bonded: Cys-346-Cys-349, Cys-346-Cys-573, Cys-376-Cys-430, Cys-395-Cys-407, Cys-437-Cys-450, and Cys-565-Cys-572. Residues 346 to 349 (CWLC) carry the CXXC motif. Residues Asn-368 and Asn-375 are each glycosylated (N-linked (GlcNAc...) asparagine; by host). Asn-408 and Asn-444 each carry an N-linked (GlcNAc...) asparagine; by host glycan. Residues 482–502 (VSLTLALLLGGLTMGGIAAGV) are fusion peptide. A coiled-coil region spans residues 513-547 (QQFQQLHAAVQDDLKEVEKSITNLEKSLTSLSEVV). The immunosuppression stretch occupies residues 548–564 (LQNRRGLDLLFLKEGGL). The CX6CC motif lies at 565-573 (CAALKEECC). Residues 621–641 (ISTIMGPLIILLLILLFGPCI) form a helical membrane-spanning segment. A lipid anchor (S-palmitoyl cysteine; by host) is attached at Cys-640. The Cytoplasmic segment spans residues 642-676 (LNRLVQFVKDRISVVQALVLTQQYHQLKPLEYEPQ). Positions 665 to 668 (YHQL) match the YXXL motif; contains endocytosis signal motif.

As to quaternary structure, the mature envelope protein (Env) consists of a trimer of SU-TM heterodimers attached by a labile interchain disulfide bond. Post-translationally, specific enzymatic cleavages in vivo yield mature proteins. Envelope glycoproteins are synthesized as an inactive precursor that is N-glycosylated and processed likely by host cell furin or by a furin-like protease in the Golgi to yield the mature SU and TM proteins. The cleavage site between SU and TM requires the minimal sequence [KR]-X-[KR]-R. The R-peptide is released from the C-terminus of the cytoplasmic tail of the TM protein upon particle formation as a result of proteolytic cleavage by the viral protease. Cleavage of this peptide is required for TM to become fusogenic. In terms of processing, the CXXC motif is highly conserved across a broad range of retroviral envelope proteins. It is thought to participate in the formation of a labile disulfide bond possibly with the CX6CC motif present in the transmembrane protein. Isomerization of the intersubunit disulfide bond to an SU intrachain disulfide bond is thought to occur upon receptor recognition in order to allow membrane fusion. The transmembrane protein is palmitoylated. Post-translationally, the R-peptide is palmitoylated.

Its subcellular location is the virion membrane. The protein resides in the host cell membrane. In terms of biological role, the surface protein (SU) attaches the virus to the host cell by binding to its receptor. This interaction triggers the refolding of the transmembrane protein (TM) and is thought to activate its fusogenic potential by unmasking its fusion peptide. Fusion occurs at the host cell plasma membrane. Its function is as follows. The transmembrane protein (TM) acts as a class I viral fusion protein. Under the current model, the protein has at least 3 conformational states: pre-fusion native state, pre-hairpin intermediate state, and post-fusion hairpin state. During viral and target cell membrane fusion, the coiled coil regions (heptad repeats) assume a trimer-of-hairpins structure, positioning the fusion peptide in close proximity to the C-terminal region of the ectodomain. The formation of this structure appears to drive apposition and subsequent fusion of viral and target cell membranes. Membranes fusion leads to delivery of the nucleocapsid into the cytoplasm. The sequence is that of Envelope glycoprotein (env) from Mus musculus (Mouse).